Consider the following 288-residue polypeptide: Energy-coupling factor transporter ATP-binding protein EcfA2 (288 aa).

The 244-residue stretch at 3 to 246 (ITFDHVSFTY…PAWLKANQLG (244 aa)) folds into the ABC transporter domain. An ATP-binding site is contributed by 40 to 47 (GHTGSGKS). The active-site Proton acceptor is glutamate 171.

This sequence belongs to the ABC transporter superfamily. Energy-coupling factor EcfA family. As to quaternary structure, forms a stable energy-coupling factor (ECF) transporter complex probably composed of 2 membrane-embedded substrate-binding proteins (S component), 2 ATP-binding proteins (A component) and 2 transmembrane proteins (T component). This complex interacts with a number of substrate-specific components, including FolT and ThiT for 5-formyltetrahydrofolate and thiamine respectively.

The protein resides in the cell membrane. Functionally, ATP-binding (A) component of a common energy-coupling factor (ECF) ABC-transporter complex. Unlike classic ABC transporters this ECF transporter provides the energy necessary to transport a number of different substrates including 5-formyltetrahydrofolate and thiamine. Expression of the complex plus FolT or ThiT in Lactococcus lactis subsp. cremoris (strain NZ9000) allows 5-formyltetrahydrofolate or thiamine uptake respectively; 5-formyltetrahydrofolate or thiamine are not taken up in the absence of FolT/ThiT or the EcfA1A2T complex. Deenergized L.lactis subsp. cremoris (treated with 2-deoxyglucose) do not take up substrate. This is Energy-coupling factor transporter ATP-binding protein EcfA2 from Lacticaseibacillus paracasei (strain ATCC 334 / BCRC 17002 / CCUG 31169 / CIP 107868 / KCTC 3260 / NRRL B-441) (Lactobacillus paracasei).